A 119-amino-acid chain; its full sequence is Large ribosomal subunit protein bL17 (119 aa).

The protein belongs to the bacterial ribosomal protein bL17 family. Part of the 50S ribosomal subunit. Contacts protein L32.

The protein is Large ribosomal subunit protein bL17 of Ureaplasma parvum serovar 3 (strain ATCC 27815 / 27 / NCTC 11736).